A 191-amino-acid chain; its full sequence is UPF0301 protein Bphy_2327 (191 aa).

This sequence belongs to the UPF0301 (AlgH) family.

The polypeptide is UPF0301 protein Bphy_2327 (Paraburkholderia phymatum (strain DSM 17167 / CIP 108236 / LMG 21445 / STM815) (Burkholderia phymatum)).